Consider the following 276-residue polypeptide: Glutathione S-transferase-like protein ustS (276 aa).

The region spanning 16–109 is the GST N-terminal domain; sequence STLPGTSKSW…HLDETYPDPP (94 aa).

The protein belongs to the GST superfamily.

It participates in mycotoxin biosynthesis. Glutathione S-transferase-like protein; part of the gene cluster that mediates the biosynthesis of the secondary metabolite ustiloxin B, an antimitotic tetrapeptide. First, ustA is processed by the subtilisin-like endoprotease Kex2 that is outside the ustiloxin B gene cluster, at the C-terminal side of Arg-Lys, after transfer to Golgi apparatus through the endoplasmic reticulum (ER). Cleavage by KEX2 generates 16 peptides YAIG-I to YAIG-XVI. To process the precursor peptide further, at least two peptidases are necessary to cleave the N-terminal and C-terminal sides of the Tyr-Ala-Ile-Gly core peptide which serves as backbone for the synthesis of ustiloxin B, through cyclization and modification of the tyrosine with a non-protein coding amino acid, norvaline. One of the two peptidases must be the serine peptidase ustP; and the other pepdidase is probably ustH. Macrocyclization of the core peptide derived from ustA requires the tyrosinase ustQ, as well as the homologous oxidases ustYa and ustYb, and leads to the production of the first cyclization product N-desmethylustiloxin F. For the formation of N-desmethylustiloxin F, three oxidation steps are required, hydroxylation at the benzylic position, hydroxylation at either the aromatic ring of Tyr or beta-position of Ile, and oxidative cyclization. UstQ may catalyze the oxidation of a phenol moiety, whereas the ustYa and ustYb are most likely responsible for the remaining two-step oxidations. N-desmethylustiloxin F is then methylated by ustM to yield ustiloxin F which in turn substrate of the cytochrome P450 monooxygenase ustC which catalyzes the formation of S-deoxyustiloxin H. The flavoprotein monooxygenases ustF1 and ustF2 then participate in the modification of the side chain of S-deoxyustiloxin H, leading to the synthesis of an oxime intermediate, via ustiloxin H. Finally, carboxylative dehydration performed by the cysteine desulfurase-like protein ustD yields ustiloxin B. The sequence is that of Glutathione S-transferase-like protein ustS from Aspergillus flavus (strain ATCC 200026 / FGSC A1120 / IAM 13836 / NRRL 3357 / JCM 12722 / SRRC 167).